The chain runs to 236 residues: C-&gt;U-editing enzyme APOBEC-1 (236 aa).

A CMP/dCMP-type deaminase domain is found at 10 to 134; that stretch reads KDYTLRRRIE…RRNRQGLKDL (125 aa). A Zn(2+)-binding site is contributed by H61. The active-site Proton donor is the E63. Positions 93 and 96 each coordinate Zn(2+).

The protein belongs to the cytidine and deoxycytidylate deaminase family. Homodimer. Interacts with A1CF; form an mRNA editing complex. Interacts with RBM47; form an mRNA editing complex. Found in a complex with CELF2/CUGBP2 and A1CF. Interacts with HNRPAB. Interacts with SYNCRIP. Zn(2+) serves as cofactor. Expressed exclusively in the intestine.

It localises to the cytoplasm. The protein resides in the nucleus. The catalysed reaction is a cytidine in mRNA + H2O + H(+) = a uridine in mRNA + NH4(+). It catalyses the reaction cytidine(6666) in apoB mRNA + H2O + H(+) = uridine(6666) in apoB mRNA + NH4(+). Its function is as follows. Cytidine deaminase catalyzing the cytidine to uridine postranscriptional editing of a variety of mRNAs. Form complexes with cofactors that confer differential editing activity and selectivity. Responsible for the postranscriptional editing of a CAA codon for Gln to a UAA codon for stop in the apolipoprotein B mRNA. Also involved in CGA (Arg) to UGA (Stop) editing in the NF1 mRNA. May also play a role in the epigenetic regulation of gene expression by participating in DNA demethylation. In Oryctolagus cuniculus (Rabbit), this protein is C-&gt;U-editing enzyme APOBEC-1.